Reading from the N-terminus, the 249-residue chain is ATP synthase subunit a, chloroplastic (249 aa).

5 helical membrane-spanning segments follow: residues 40–60 (QVLITSWVVIAILLGSAVLVV), 97–117 (VPFIGTLFLFIFVSNWSGALL), 136–156 (INTTVALALLTSVAYFYAGLS), 201–221 (LVVVVLVSLVPLVVPIPVMFL), and 222–242 (GLFTSGIQALIFATLAAAYIG).

The protein belongs to the ATPase A chain family. As to quaternary structure, F-type ATPases have 2 components, CF(1) - the catalytic core - and CF(0) - the membrane proton channel. CF(1) has five subunits: alpha(3), beta(3), gamma(1), delta(1), epsilon(1). CF(0) has four main subunits: a, b, b' and c.

It localises to the plastid. The protein resides in the chloroplast thylakoid membrane. In terms of biological role, key component of the proton channel; it plays a direct role in the translocation of protons across the membrane. The polypeptide is ATP synthase subunit a, chloroplastic (Aethionema grandiflorum (Persian stone-cress)).